Here is a 151-residue protein sequence, read N- to C-terminus: MSIVRRSNVFDPFADLWADPFDTFRSIVPAISGGSSETAAFANARVDWKETPEAHVFKVDLPGVKKEEVKVEVEDGNVLVVSGERSREKEDKNDKWHRVERSSGKFVRRFRLPEDAKVEEVKAGLENGVLTVTVPKAEVKKPEVKAIEISG.

The sHSP domain occupies 37-151 (ETAAFANARV…PEVKAIEISG (115 aa)).

The protein belongs to the small heat shock protein (HSP20) family. In terms of assembly, may form oligomeric structures.

Its subcellular location is the cytoplasm. The polypeptide is 16.9 kDa class I heat shock protein 1 (hsp16.9A) (Triticum aestivum (Wheat)).